Reading from the N-terminus, the 756-residue chain is U3 small nucleolar RNA-associated protein 25 homolog (756 aa).

The interval 1 to 159 is disordered; that stretch reads MGKRGSRSQS…SQTSPEEFTD (159 aa). Promotes p53/TP53 degradation regions lie at residues 1 to 185 and 573 to 635; these read MGKR…SLKA and VQLP…KKEE. Position 10 is a phosphoserine (Ser10). Basic and acidic residues predominate over residues 25 to 43; that stretch reads RDFGEEHPFYDRVSRKEAK. Ser50, Ser52, Ser58, Ser60, Ser62, and Ser64 each carry phosphoserine. Composition is skewed to acidic residues over residues 54-64 and 84-121; these read DSSDSESDSES and EEEE…EEMA. Positions 636–697 are represses p53/TP53 degradation; the sequence is LNFTHICEYT…YELPTYPHFY (62 aa).

The protein belongs to the UTP25 family. As to quaternary structure, interacts with CAPN3; the interaction is required for CAPN3 translocation to the nucleolus. Post-translationally, phosphorylated. Phosphorylation is required to promote p53/TP53 degradation in the nucleolus which promotes cell cycle progression and liver development. In terms of tissue distribution, expressed in colon.

It is found in the nucleus. It localises to the nucleolus. In terms of biological role, component of the ribosomal small subunit processome for the biogenesis of ribosomes, functions in pre-ribosomal RNA (pre-rRNA) processing. Essential for embryonic development in part through the regulation of p53 pathway. Controls the expansion growth of digestive organs and liver. Also involved in the sympathetic neuronal development. Mediates, with CAPN3, the proteasome-independent degradation of p53/TP53. The protein is U3 small nucleolar RNA-associated protein 25 homolog of Homo sapiens (Human).